The following is a 145-amino-acid chain: Hemoglobin subunit beta-3 (145 aa).

The region spanning 1-145 (MLTAEEKAAV…VANALAHRYH (145 aa)) is the Globin domain. At threonine 11 the chain carries Phosphothreonine. N6-acetyllysine is present on lysine 58. Residue histidine 62 participates in heme b binding. N6-acetyllysine is present on lysine 81. Heme b is bound at residue histidine 91. An S-nitrosocysteine modification is found at cysteine 92.

The protein belongs to the globin family. In terms of assembly, heterotetramer of two alpha chains and two beta chains. Red blood cells.

Its function is as follows. Involved in oxygen transport from the lung to the various peripheral tissues. The sequence is that of Hemoglobin subunit beta-3 (HBB) from Odocoileus virginianus virginianus (Virginia white-tailed deer).